A 144-amino-acid chain; its full sequence is uncharacterized protein (144 aa).

Helical transmembrane passes span 7–29 (FPAS…RDLV), 51–73 (VAIG…FLLV), 85–107 (AVLA…VGAF), and 122–139 (HLHH…LIFV).

The protein resides in the cell membrane. This is an uncharacterized protein from Treponema pallidum (strain Nichols).